Reading from the N-terminus, the 390-residue chain is MKLIQKNIEKNGSGWITMCPEEPEDMWHLYNILQVGDQLKASTVRRVVKVGATGSTSGSRVVMKLRILVENMDFDTKAAQLHIKGRTTEYHPEVKMGSYHTLDLELHRNFTLYKNEWDAFALDRVDAACNPSRNAEIGAVVLDEGLANICLITDYMTILRQRIDQVIPRKRRGDSSAYQKGLDKFYDSVFQSINSEFDFDKLKVVILASPGFVARGLYDYIFSMAVKLDLKQIVKSKNKFVILHSSTGHIHSLNEILKDPAVESKLADTKYVQEIRVLNKFYDVMNEDDRKAWYGPNHVLKAFELGAIGELLISDSLFRSSDIATRKKWVSLVEGVKEINCPVYIFSSLHESGKQLDLLSGIAAILTYPVDEEDISEDEEDEESQNFEHS.

Belongs to the eukaryotic release factor 1 family. Pelota subfamily. Component of the Dom34-Hbs1 complex, also named Pelota-HBS1L complex, composed of dom34 and hbs1. A divalent metal cation serves as cofactor.

Its subcellular location is the cytoplasm. Component of the Dom34-Hbs1 complex, a complex that recognizes stalled ribosomes and triggers the No-Go Decay (NGD) pathway. In the Dom34-Hbs1 complex, dom34 recognizes ribosomes stalled at the 3' end of an mRNA and engages stalled ribosomes by destabilizing mRNA in the mRNA channel. Following ribosome-binding, the Dom34-Hbs1 complex promotes the disassembly of stalled ribosomes, followed by degradation of damaged mRNAs as part of the NGD pathway. The sequence is that of Protein dom34 from Schizosaccharomyces pombe (strain 972 / ATCC 24843) (Fission yeast).